The chain runs to 573 residues: Isocitrate dehydrogenase kinase/phosphatase (573 aa).

Residues 317–323 and K338 contribute to the ATP site; that span reads APGVRGM. The active site involves D373.

The protein belongs to the AceK family.

It is found in the cytoplasm. It carries out the reaction L-seryl-[isocitrate dehydrogenase] + ATP = O-phospho-L-seryl-[isocitrate dehydrogenase] + ADP + H(+). Functionally, bifunctional enzyme which can phosphorylate or dephosphorylate isocitrate dehydrogenase (IDH) on a specific serine residue. This is a regulatory mechanism which enables bacteria to bypass the Krebs cycle via the glyoxylate shunt in response to the source of carbon. When bacteria are grown on glucose, IDH is fully active and unphosphorylated, but when grown on acetate or ethanol, the activity of IDH declines drastically concomitant with its phosphorylation. In Pseudomonas fluorescens (strain Pf0-1), this protein is Isocitrate dehydrogenase kinase/phosphatase.